The chain runs to 409 residues: Serine/threonine transporter SstT (409 aa).

9 helical membrane-spanning segments follow: residues Leu-24–Phe-44, Phe-48–Ile-68, Ile-82–Met-102, Ala-142–Leu-162, Leu-194–Gly-214, Leu-218–Val-238, Ile-292–Met-312, Gly-319–Cys-339, and Val-365–Thr-385.

This sequence belongs to the dicarboxylate/amino acid:cation symporter (DAACS) (TC 2.A.23) family.

Its subcellular location is the cell inner membrane. It carries out the reaction L-serine(in) + Na(+)(in) = L-serine(out) + Na(+)(out). The enzyme catalyses L-threonine(in) + Na(+)(in) = L-threonine(out) + Na(+)(out). Involved in the import of serine and threonine into the cell, with the concomitant import of sodium (symport system). This Neisseria meningitidis serogroup C / serotype 2a (strain ATCC 700532 / DSM 15464 / FAM18) protein is Serine/threonine transporter SstT.